We begin with the raw amino-acid sequence, 64 residues long: MSKLVKTLTVDEISKIQTNGGKPAWCWYTLAMCGAGYDSGTCDYMYSHCFGVKHSSGGGGSYHC.

The N-terminal stretch at 1–21 (MSKLVKTLTVDEISKIQTNGG) is a signal peptide. The lanthionine (Ser-Cys) cross-link spans 61-64 (SYHC).

Contains 2 disulfide bonds.

The protein localises to the secreted. Its function is as follows. Bacteriocin with a narrow antibacterial spectrum. Antibacterial activity against the Gram-positive bacteria L.plantarun, L.pentosus, L.curvatus, L.lindneri, L.mesenteroides and E.faecilis. Lacks antibacterial activity against the Gram-positive bacteria L.brevis, L.sakei, L.lactis, P.acidilactici, B.subtilis, B.cereus, L.monocytogenes and S.aureus, and against the Gram-negative bacteria E.coli and S.typhimurium. The polypeptide is Bacteriocin plantaricin ASM1 (Lactiplantibacillus plantarum (Lactobacillus plantarum)).